The sequence spans 709 residues: Methylmalonyl-CoA mutase (709 aa).

Substrate is bound by residues 73–77 (TIRQY), 183–185 (TIQ), arginine 195, lysine 222, histidine 232, and 271–273 (RLS). In terms of domain architecture, B12-binding spans 579–709 (RPRMLVVKMG…ILDLIREARS (131 aa)). Histidine 592 serves as a coordination point for adenosylcob(III)alamin.

This sequence belongs to the methylmalonyl-CoA mutase family. Homodimer. It depends on adenosylcob(III)alamin as a cofactor.

It catalyses the reaction (R)-methylmalonyl-CoA = succinyl-CoA. It functions in the pathway metabolic intermediate metabolism; propanoyl-CoA degradation; succinyl-CoA from propanoyl-CoA: step 3/3. In terms of biological role, radical enzyme that catalyzes the transformation of (2R)-methylmalonyl-CoA to succinyl-CoA. Is involved in the ethylmalonyl-CoA pathway for acetyl-CoA assimilation required for R.sphaeroides growth on acetate as sole carbon source. This is Methylmalonyl-CoA mutase from Cereibacter sphaeroides (strain ATCC 17023 / DSM 158 / JCM 6121 / CCUG 31486 / LMG 2827 / NBRC 12203 / NCIMB 8253 / ATH 2.4.1.) (Rhodobacter sphaeroides).